A 317-amino-acid polypeptide reads, in one-letter code: Putative 2-hydroxyacid dehydrogenase SAOUHSC_02577 (317 aa).

Residues 155-156 (EI), 234-236 (ASR), and Asp260 each bind NAD(+). The active site involves Arg236. Residue Glu265 is part of the active site. The active-site Proton donor is His283. 283–286 (HIGN) is an NAD(+) binding site.

It belongs to the D-isomer specific 2-hydroxyacid dehydrogenase family.

The polypeptide is Putative 2-hydroxyacid dehydrogenase SAOUHSC_02577 (Staphylococcus aureus (strain NCTC 8325 / PS 47)).